A 190-amino-acid polypeptide reads, in one-letter code: Lipid A acyltransferase PagP (190 aa).

The N-terminal stretch at 1–29 is a signal peptide; the sequence is MYVAMIIRKYFLIIALLLMPWLAIPSVSA. Active-site residues include histidine 62, aspartate 105, and serine 106.

The protein belongs to the lipid A palmitoyltransferase family. Homodimer.

It is found in the cell outer membrane. The catalysed reaction is a lipid A + a 1,2-diacyl-sn-glycero-3-phosphocholine = a hepta-acyl lipid A + a 2-acyl-sn-glycero-3-phosphocholine. It carries out the reaction a lipid IVA + a 1,2-diacyl-sn-glycero-3-phosphocholine = a lipid IVB + a 2-acyl-sn-glycero-3-phosphocholine. It catalyses the reaction a lipid IIA + a 1,2-diacyl-sn-glycero-3-phosphocholine = a lipid IIB + a 2-acyl-sn-glycero-3-phosphocholine. In terms of biological role, transfers a fatty acid residue from the sn-1 position of a phospholipid to the N-linked hydroxyfatty acid chain on the proximal unit of lipid A or its precursors. Required for resistance to cationic antimicrobial peptides (CAMPs). Modifications of lipid A with an acyl chain allow to evade host immune defenses by resisting antimicrobial peptides and attenuating the inflammatory response to infection triggered by lipopolysaccharide through the Toll-like receptor 4 (TLR4) signal transduction pathway. In Salmonella typhimurium (strain LT2 / SGSC1412 / ATCC 700720), this protein is Lipid A acyltransferase PagP.